The primary structure comprises 79 residues: U24-theraphotoxin-Cg1a (79 aa).

Positions 1–19 are cleaved as a signal peptide; that stretch reads MRVLFIIAVLALISVGCYA. Residues 20 to 44 constitute a propeptide that is removed on maturation; that stretch reads SEMKDRSSRNEVLSAIFAIEEPQER. Cystine bridges form between C46/C61, C53/C66, and C60/C73. Position 78 is a tryptophan amide (W78).

Belongs to the neurotoxin 10 (Hwtx-1) family. 35 (Jztx-27) subfamily. As to expression, expressed by the venom gland.

It is found in the secreted. Its function is as follows. Probable ion channel inhibitor. The sequence is that of U24-theraphotoxin-Cg1a from Chilobrachys guangxiensis (Chinese earth tiger tarantula).